The following is a 198-amino-acid chain: Putative pseudouridine methyltransferase (198 aa).

Residues leucine 132 and cysteine 186 each contribute to the S-adenosyl-L-methionine site.

It belongs to the methyltransferase superfamily. TrmY family.

Its subcellular location is the cytoplasm. The chain is Putative pseudouridine methyltransferase from Vibrio vulnificus (strain CMCP6).